We begin with the raw amino-acid sequence, 435 residues long: Endoglucanase EG-1 (435 aa).

The signal sequence occupies residues 1–20; that stretch reads MARGTALLGLTSLLLGLVNG. Glutamine 21 carries the post-translational modification Pyrrolidone carboxylic acid. 3 cysteine pairs are disulfide-bonded: cysteine 38-cysteine 44, cysteine 71-cysteine 93, and cysteine 83-cysteine 89. N-linked (GlcNAc...) asparagine glycosylation occurs at asparagine 109. Disulfide bonds link cysteine 160/cysteine 385, cysteine 192/cysteine 215, cysteine 196/cysteine 214, cysteine 235/cysteine 254, cysteine 243/cysteine 248, and cysteine 259/cysteine 335. Glutamate 217 acts as the Nucleophile in catalysis. The active-site Proton donor is glutamate 222. Asparagine 267 carries N-linked (GlcNAc...) asparagine glycosylation.

The protein belongs to the glycosyl hydrolase 7 (cellulase C) family.

The protein resides in the secreted. It catalyses the reaction Endohydrolysis of (1-&gt;4)-beta-D-glucosidic linkages in cellulose, lichenin and cereal beta-D-glucans.. Its function is as follows. The biological conversion of cellulose to glucose generally requires three types of hydrolytic enzymes: (1) Endoglucanases which cut internal beta-1,4-glucosidic bonds; (2) Exocellobiohydrolases that cut the disaccharide cellobiose from the non-reducing end of the cellulose polymer chain; (3) Beta-1,4-glucosidases which hydrolyze the cellobiose and other short cello-oligosaccharides to glucose. The polypeptide is Endoglucanase EG-1 (EG-1) (Humicola insolens (Soft-rot fungus)).